Here is a 358-residue protein sequence, read N- to C-terminus: MTDWTDPDALDLSDGETFDSLLDRADTREKGHFFEFFAEGDELAHDPGLRLSHHGSEQWMGQTLNHDPAYWRADTAQERGFEERPVHPDYLLACVMGITVEDLSEKGGYFLGRDDVEFHQPATAGTPLSVTSTVVDTRTSSSRPKYGIVTWETEGRDRETGETLVSYRRTNMIPRREPAATDGGAVGEQDEGGPAMPDTLLSPDGERFGDFQAALDTAREENAAVAYRHERGRTMDDQLVAGLPLSTLNTARQHHNRDEMADSPSGDIVAYGDVTRSIALAHARSDEATYREQRFADERFHDFVTLGDTVYGFTRVLDCDPDAGPERAGAVTFEHVAFNQEQTPVYSGRRTAHIQRHQ.

This sequence belongs to the enoyl-CoA hydratase/isomerase family. Homodimer.

It catalyses the reaction (2R,3S)-beta-methylmalyl-CoA = 2-methylfumaryl-CoA + H2O. Its activity is regulated as follows. Shows highest activity at 0.5 M KCl. Does not require divalent ions for activity. In terms of biological role, involved in the methylaspartate cycle. Catalyzes the reversible hydration of mesaconyl-CoA (2-methylfumaryl-CoA) to yield beta-methylmalyl-CoA ((2R,3S)-beta-methylmalyl-CoA). Also shows activity with mesaconyl-C4-CoA (3-methylfumaryl-CoA), (S)-citramalyl-CoA and (S)-malyl-CoA. This Haloarcula hispanica (strain ATCC 33960 / DSM 4426 / JCM 8911 / NBRC 102182 / NCIMB 2187 / VKM B-1755) protein is Mesaconyl-CoA hydratase.